Here is a 94-residue protein sequence, read N- to C-terminus: MGRSLKKGPYCEDKLLKKIELMNQSGQKKVIKTWSRRSTIMPEMIGHTLAVHDGRKHIPVYVTEDMVGMKLGEFAPTRTYRGHAGKSEKSSRAR.

Belongs to the universal ribosomal protein uS19 family.

In terms of biological role, protein S19 forms a complex with S13 that binds strongly to the 16S ribosomal RNA. In Syntrophomonas wolfei subsp. wolfei (strain DSM 2245B / Goettingen), this protein is Small ribosomal subunit protein uS19.